Here is a 320-residue protein sequence, read N- to C-terminus: MNLDLTPLAWRLAGTPLAAWANDVQQQLDAKLAIGHGDLPRWRRAVDALPTLMPTQIELRECFRLAAPCDEATRQATREALMGLSPWRKGPFEVFGVHVDTEWRSDWKWARVAPHLDLAGKRILDVGCGNGYYMWRMLGAGADSVVGVDPNWLFFCQFHAMKRYLPELPAWHLPFALEELPPKLEGFETVFSMGVLYHRRSPVDHLLDLKDCLVRGGELVLETLVVEGDENTALVPEDRYAQMRNVWFLPSVPALERWLRRAGFVDVRCVDVSVTSVEEQRSTYWMRYQSLPDFLDPQDHGRTVEGLPAPMRAVLLARKP.

Carboxy-S-adenosyl-L-methionine is bound by residues lysine 89, tryptophan 103, lysine 108, glycine 127, 177–178 (LE), methionine 193, tyrosine 197, and arginine 312.

The protein belongs to the class I-like SAM-binding methyltransferase superfamily. CmoB family. Homotetramer.

It catalyses the reaction carboxy-S-adenosyl-L-methionine + 5-hydroxyuridine(34) in tRNA = 5-carboxymethoxyuridine(34) in tRNA + S-adenosyl-L-homocysteine + H(+). Catalyzes carboxymethyl transfer from carboxy-S-adenosyl-L-methionine (Cx-SAM) to 5-hydroxyuridine (ho5U) to form 5-carboxymethoxyuridine (cmo5U) at position 34 in tRNAs. This Stutzerimonas stutzeri (strain A1501) (Pseudomonas stutzeri) protein is tRNA U34 carboxymethyltransferase.